The chain runs to 193 residues: MTEYLLLFVGTVLVNNFVLVKFLGLCPFLGVSKKLESAIGMGMATTFVMTLASVSAWVINTFILVPLDLVYLRTLSFILVIAVVVQFTEMVVRKTSPALYRLLGIFLPLITTNCAVLGVALLNVNLGYNFLQSAVYGFSAAAGFSLVMVLFAAIRERLAVADVPAPFRGSSIALITAGLMSLAFMGFTGLVKF.

6 helical membrane passes run Leu5 to Leu25, Phe47 to Leu67, Leu72 to Val92, Leu102 to Leu122, Ala134 to Ile154, and Ser171 to Val191.

It belongs to the NqrDE/RnfAE family. In terms of assembly, the complex is composed of six subunits: RnfA, RnfB, RnfC, RnfD, RnfE and RnfG.

It is found in the cell inner membrane. Functionally, part of a membrane-bound complex that couples electron transfer with translocation of ions across the membrane. This is Ion-translocating oxidoreductase complex subunit A from Serratia proteamaculans (strain 568).